We begin with the raw amino-acid sequence, 930 residues long: Isoleucine--tRNA ligase (930 aa).

Positions 57–67 (PYANGHIHLGT) match the 'HIGH' region motif. Glutamate 559 provides a ligand contact to L-isoleucyl-5'-AMP. The 'KMSKS' region motif lies at 600–604 (KMSKS). ATP is bound at residue lysine 603. Zn(2+) is bound by residues cysteine 899, cysteine 902, cysteine 918, and cysteine 921.

Belongs to the class-I aminoacyl-tRNA synthetase family. IleS type 1 subfamily. As to quaternary structure, monomer. Zn(2+) is required as a cofactor.

Its subcellular location is the cytoplasm. The catalysed reaction is tRNA(Ile) + L-isoleucine + ATP = L-isoleucyl-tRNA(Ile) + AMP + diphosphate. Its function is as follows. Catalyzes the attachment of isoleucine to tRNA(Ile). As IleRS can inadvertently accommodate and process structurally similar amino acids such as valine, to avoid such errors it has two additional distinct tRNA(Ile)-dependent editing activities. One activity is designated as 'pretransfer' editing and involves the hydrolysis of activated Val-AMP. The other activity is designated 'posttransfer' editing and involves deacylation of mischarged Val-tRNA(Ile). The chain is Isoleucine--tRNA ligase from Desulforudis audaxviator (strain MP104C).